Consider the following 148-residue polypeptide: uncharacterized protein (148 aa).

Residues 38–99 (QFRRHHHAEH…RRHLRKGHLK (62 aa)) form a disordered region. The segment covering 64–82 (FHHDGGRHGHATRIHENNR) has biased composition (basic and acidic residues). Basic residues predominate over residues 83–99 (RPHKRNRRRHLRKGHLK).

This is an uncharacterized protein from Fowl adenovirus A serotype 1 (strain CELO / Phelps) (FAdV-1).